Reading from the N-terminus, the 120-residue chain is Large ribosomal subunit protein uL18 (120 aa).

Residues 1–24 (MITKAAKNATRKKRHARVRAKLTG) are disordered. A compositionally biased stretch (basic residues) spans 9-20 (ATRKKRHARVRA).

The protein belongs to the universal ribosomal protein uL18 family. Part of the 50S ribosomal subunit; part of the 5S rRNA/L5/L18/L25 subcomplex. Contacts the 5S and 23S rRNAs.

This is one of the proteins that bind and probably mediate the attachment of the 5S RNA into the large ribosomal subunit, where it forms part of the central protuberance. This is Large ribosomal subunit protein uL18 from Bacillus mycoides (strain KBAB4) (Bacillus weihenstephanensis).